The primary structure comprises 316 residues: Retron Ec73 reverse transcriptase (316 aa).

Residues 1-243 enclose the Reverse transcriptase domain; that stretch reads MRIYSLIDSQ…GSIVVTGLKV (243 aa). Mg(2+)-binding residues include D99, D189, and D190. The interval 247 to 316 is necessary and required for recognition and binding of RNA; it reads FHITLHRSMK…WIQNLHNKVE (70 aa).

The protein belongs to the bacterial reverse transcriptase family.

It catalyses the reaction DNA(n) + a 2'-deoxyribonucleoside 5'-triphosphate = DNA(n+1) + diphosphate. Functionally, reverse transcriptase (RT) component of antiviral defense system retron Ec73, composed of a non-coding RNA (ncRNA) followed by a ribosyltransferase/DNA-binding protein then a reverse transcriptase (RT). Expression of this retron confers protection against bacteriophages SECphi4, SECphi6, SECphi27 and P1. At multiplicity of infection (MOI) of 0.02 cultures grow normally when infected with SECphi4 without collapsing, at MOI 2 cultures enter growth stasis. Responsible for synthesis of msDNA-Ec73 (a branched molecule with RNA linked by a 2',5'-phosphodiester bond to ssDNA). The retron transcript serves as primer (from a conserved internal G residue) and template for the reaction, and codes for the RT. Recognizes only its cognate RNA as a primer template. This Escherichia coli protein is Retron Ec73 reverse transcriptase.